The primary structure comprises 96 residues: uncharacterized protein (96 aa).

Residues 53 to 71 (VLLMPLLQSFVLSLALMGV) traverse the membrane as a helical segment.

It localises to the membrane. This is an uncharacterized protein from Saccharomyces cerevisiae (strain ATCC 204508 / S288c) (Baker's yeast).